Here is a 496-residue protein sequence, read N- to C-terminus: UDP-N-acetylmuramoyl-L-alanyl-D-glutamate--2,6-diaminopimelate ligase (496 aa).

UDP-N-acetyl-alpha-D-muramoyl-L-alanyl-D-glutamate-binding residues include leucine 29 and serine 31. 118 to 124 (GTNGKTT) is an ATP binding site. Residues asparagine 159, 160–161 (TT), serine 187, glutamine 193, and arginine 195 contribute to the UDP-N-acetyl-alpha-D-muramoyl-L-alanyl-D-glutamate site. Lysine 227 carries the N6-carboxylysine modification. Residues arginine 392, 416 to 419 (DNPR), glycine 467, and glutamate 471 contribute to the meso-2,6-diaminopimelate site. Positions 416–419 (DNPR) match the Meso-diaminopimelate recognition motif motif.

The protein belongs to the MurCDEF family. MurE subfamily. It depends on Mg(2+) as a cofactor. Carboxylation is probably crucial for Mg(2+) binding and, consequently, for the gamma-phosphate positioning of ATP.

It is found in the cytoplasm. It catalyses the reaction UDP-N-acetyl-alpha-D-muramoyl-L-alanyl-D-glutamate + meso-2,6-diaminopimelate + ATP = UDP-N-acetyl-alpha-D-muramoyl-L-alanyl-gamma-D-glutamyl-meso-2,6-diaminopimelate + ADP + phosphate + H(+). Its pathway is cell wall biogenesis; peptidoglycan biosynthesis. Catalyzes the addition of meso-diaminopimelic acid to the nucleotide precursor UDP-N-acetylmuramoyl-L-alanyl-D-glutamate (UMAG) in the biosynthesis of bacterial cell-wall peptidoglycan. This is UDP-N-acetylmuramoyl-L-alanyl-D-glutamate--2,6-diaminopimelate ligase from Wigglesworthia glossinidia brevipalpis.